We begin with the raw amino-acid sequence, 506 residues long: Galactose/methyl galactoside import ATP-binding protein MglA (506 aa).

2 consecutive ABC transporter domains span residues 14 to 249 (LEMS…VGRS) and 264 to 506 (VILE…SLHL). Residue 46–53 (GENGAGKS) participates in ATP binding.

Belongs to the ABC transporter superfamily. Galactose/methyl galactoside importer (TC 3.A.1.2.3) family. The complex is composed of one ATP-binding protein (MglA), two transmembrane proteins (MglC) and a solute-binding protein (MglB).

The protein localises to the cell inner membrane. It carries out the reaction D-galactose(out) + ATP + H2O = D-galactose(in) + ADP + phosphate + H(+). The enzyme catalyses methyl beta-D-galactoside(out) + ATP + H2O = methyl beta-D-galactoside(in) + ADP + phosphate + H(+). Functionally, part of the ABC transporter complex MglABC involved in galactose/methyl galactoside import. Responsible for energy coupling to the transport system. The chain is Galactose/methyl galactoside import ATP-binding protein MglA from Escherichia coli (strain K12).